A 637-amino-acid polypeptide reads, in one-letter code: Glutathione hydrolase 3 (637 aa).

Residues 28–48 (LKISLLLLLILLATSGYYSFS) form a helical membrane-spanning segment. Asparagine 50 is a glycosylation site (N-linked (GlcNAc...) asparagine). Arginine 147 provides a ligand contact to L-glutamate. 3 N-linked (GlcNAc...) asparagine glycosylation sites follow: asparagine 271, asparagine 374, and asparagine 398. The Nucleophile role is filled by threonine 418. L-glutamate contacts are provided by residues threonine 436, asparagine 438, glutamate 457, aspartate 460, 488 to 489 (SS), and 509 to 510 (GG). N-linked (GlcNAc...) asparagine glycosylation occurs at asparagine 553.

Belongs to the gamma-glutamyltransferase family. In terms of tissue distribution, expressed in roots, cotyledons, leaves, flowers and siliques.

The protein resides in the vacuole membrane. The catalysed reaction is an N-terminal (5-L-glutamyl)-[peptide] + an alpha-amino acid = 5-L-glutamyl amino acid + an N-terminal L-alpha-aminoacyl-[peptide]. The enzyme catalyses glutathione + H2O = L-cysteinylglycine + L-glutamate. It catalyses the reaction an S-substituted glutathione + H2O = an S-substituted L-cysteinylglycine + L-glutamate. The protein operates within sulfur metabolism; glutathione metabolism. May play a role in protecting plants from some xenobiotic chemicals by degrading vacuolar glutathione conjugates into cysteine conjugates. This chain is Glutathione hydrolase 3 (GGT3), found in Arabidopsis thaliana (Mouse-ear cress).